The chain runs to 101 residues: Small ribosomal subunit protein uS14 (101 aa).

This sequence belongs to the universal ribosomal protein uS14 family. As to quaternary structure, part of the 30S ribosomal subunit. Contacts proteins S3 and S10.

In terms of biological role, binds 16S rRNA, required for the assembly of 30S particles and may also be responsible for determining the conformation of the 16S rRNA at the A site. In Rhizobium etli (strain CIAT 652), this protein is Small ribosomal subunit protein uS14.